The following is a 717-amino-acid chain: Serine/threonine-protein kinase STE11 (717 aa).

An SAM domain is found at 20–84 (NDLPFVQLFL…LRKSKSFQRD (65 aa)). Serine 323 bears the Phosphoserine mark. A Protein kinase domain is found at 415 to 712 (WLKGACIGSG…ALELLQHPWL (298 aa)). ATP is bound by residues 421 to 429 (IGSGSFGSV) and lysine 444. A compositionally biased stretch (polar residues) spans 452–466 (NIGVPTDNNKQANSD). Residues 452 to 481 (NIGVPTDNNKQANSDENNEQEEQQEKIEDV) form a disordered region. Position 465 is a phosphoserine (serine 465). Catalysis depends on aspartate 579, which acts as the Proton acceptor.

It belongs to the protein kinase superfamily. STE Ser/Thr protein kinase family. MAP kinase kinase kinase subfamily. In terms of assembly, homodimer. Interacts (via SAM domain) with STE50 (via SAM domain). Interacts with PBS2 and SHO1.

It carries out the reaction L-seryl-[protein] + ATP = O-phospho-L-seryl-[protein] + ADP + H(+). The catalysed reaction is L-threonyl-[protein] + ATP = O-phospho-L-threonyl-[protein] + ADP + H(+). In terms of biological role, serine/threonine protein kinase required for cell-type-specific transcription and signal transduction in yeast. It is thought that it phosphorylates the STE7 protein kinase which itself, phosphorylates the FUS3 and or KSS1 kinases. This Saccharomyces cerevisiae (strain ATCC 204508 / S288c) (Baker's yeast) protein is Serine/threonine-protein kinase STE11 (STE11).